Consider the following 457-residue polypeptide: Adenylosuccinate synthetase isozyme 1 (457 aa).

The segment at 1-25 (MSGTRASNDRPPSAGGVKRGRLQHE) is disordered. Residues 42-48 (GDEGKGK) and 70-72 (GHT) each bind GTP. The Proton acceptor role is filled by Asp43. Mg(2+)-binding residues include Asp43 and Gly70. Position 43 (Asp43) interacts with substrate. IMP is bound by residues 43–46 (DEGK), 68–71 (NAGH), Thr163, Arg177, Asn256, Thr271, and Arg335. The active-site Proton donor is His71. 331–337 (VTTGRKR) is a substrate binding site. Residues Arg337, 363 to 365 (KLD), and 445 to 448 (GVGK) contribute to the GTP site.

This sequence belongs to the adenylosuccinate synthetase family. As to quaternary structure, homodimer. The cofactor is Mg(2+). Predominantly expressed in the striated muscle tissues.

It localises to the cytoplasm. It carries out the reaction IMP + L-aspartate + GTP = N(6)-(1,2-dicarboxyethyl)-AMP + GDP + phosphate + 2 H(+). It participates in purine metabolism; AMP biosynthesis via de novo pathway; AMP from IMP: step 1/2. Functionally, component of the purine nucleotide cycle (PNC), which interconverts IMP and AMP to regulate the nucleotide levels in various tissues, and which contributes to glycolysis and ammoniagenesis. Catalyzes the first committed step in the biosynthesis of AMP from IMP. This is Adenylosuccinate synthetase isozyme 1 from Sus scrofa (Pig).